The following is a 776-amino-acid chain: Bifunctional lysine-specific demethylase and histidyl-hydroxylase NO66 (776 aa).

3 disordered regions span residues 1–57, 87–126, and 165–288; these read MGKK…EPKF, EQNGGKKRRHREISPKMEAKKPKVESKSKDGVAAKKAHKH, and ILDE…DDEG. Basic and acidic residues-rich tracts occupy residues 47 to 57 and 98 to 119; these read HYKEPSKEPKF and EISPKMEAKKPKVESKSKDGVA. Residues 166 to 204 are compositionally biased toward acidic residues; sequence LDEEVEDEEIDEEEFEDEEEVEDEEGMDEDETEIDESEM. Residues 206 to 216 show a composition bias toward basic and acidic residues; the sequence is VDPKDIERCIE. The segment covering 217 to 288 has biased composition (acidic residues); the sequence is FEDVDDEDEM…EMDADSDDEG (72 aa). A JmjC domain is found at 425–569; that stretch reads QLVNPQTFDD…NLMEKVIPEA (145 aa). Fe cation-binding residues include H468, D470, and H535.

It belongs to the ROX family. NO66 subfamily. It depends on Fe(2+) as a cofactor.

It localises to the nucleus. The catalysed reaction is N(6),N(6)-dimethyl-L-lysyl(36)-[histone H3] + 2 2-oxoglutarate + 2 O2 = L-lysyl(36)-[histone H3] + 2 formaldehyde + 2 succinate + 2 CO2. Functionally, oxygenase that can act as both a histone lysine demethylase and a ribosomal histidine hydroxylase. Specifically demethylates 'Lys-4' (H3K4me) and 'Lys-36' (H3K36me) of histone H3, thereby playing a central role in histone code. The protein is Bifunctional lysine-specific demethylase and histidyl-hydroxylase NO66 (jmjc-1) of Caenorhabditis briggsae.